A 513-amino-acid polypeptide reads, in one-letter code: ATP synthase subunit alpha (513 aa).

ATP is bound at residue Gly-169–Thr-176.

It belongs to the ATPase alpha/beta chains family. In terms of assembly, F-type ATPases have 2 components, CF(1) - the catalytic core - and CF(0) - the membrane proton channel. CF(1) has five subunits: alpha(3), beta(3), gamma(1), delta(1), epsilon(1). CF(0) has three main subunits: a(1), b(2) and c(9-12). The alpha and beta chains form an alternating ring which encloses part of the gamma chain. CF(1) is attached to CF(0) by a central stalk formed by the gamma and epsilon chains, while a peripheral stalk is formed by the delta and b chains.

The protein resides in the cell inner membrane. It carries out the reaction ATP + H2O + 4 H(+)(in) = ADP + phosphate + 5 H(+)(out). In terms of biological role, produces ATP from ADP in the presence of a proton gradient across the membrane. The alpha chain is a regulatory subunit. In Salmonella paratyphi C (strain RKS4594), this protein is ATP synthase subunit alpha.